The following is a 743-amino-acid chain: Polyribonucleotide nucleotidyltransferase (743 aa).

Mg(2+) is bound by residues D489 and D495. Residues 556 to 618 (PRIEKMHIGK…PCIDAAIGMI (63 aa)) form the KH domain. An S1 motif domain is found at 628-698 (GETYPGKITS…KTGKFKLSRK (71 aa)). Residues 704–743 (PEGYVEPQPRERRERREGGREGGRNFERRGGDRDHREPRG) are disordered.

This sequence belongs to the polyribonucleotide nucleotidyltransferase family. Requires Mg(2+) as cofactor.

The protein localises to the cytoplasm. The catalysed reaction is RNA(n+1) + phosphate = RNA(n) + a ribonucleoside 5'-diphosphate. In terms of biological role, involved in mRNA degradation. Catalyzes the phosphorolysis of single-stranded polyribonucleotides processively in the 3'- to 5'-direction. The polypeptide is Polyribonucleotide nucleotidyltransferase (Porphyromonas gingivalis (strain ATCC BAA-308 / W83)).